The chain runs to 463 residues: MSLSLWQQCLARLQDELPATEFSMWIRPLQAELSDNTLALYAPNRFVLDWVRDKYLNNINGLLNDFCGTDAPLLRFEVGSKPLSQIISQTVTASVSAPSAPIVRVAAPSRPSWDNAAPQPELSYRSNVNPKHTFDNFVEGKSNQLARAAARQVADNPGGAYNPLFLYGGTGLGKTHLLHAVGNGIMARKANAKVVYMHSERFVQDMVKALQNNAIEEFKRYYRSVDALLIDDIQFFANKERSQEEFFHTFNALLEGNQQIILTSDRYPKEINGVEDRLKSRFGWGLTVAIEPPELETRVAILMKKADENNIRLPGEVAFFIAKRLRSNVRELEGALNRVIANANFTGRAITIDFVREALRDLLALQEKLVTIDNIQKTVAEYYKIKIADLLSKRRSRSVARPRQMAMALAKELTNHSLPEIGDAFGGRDHTTVLHACRKIEQLREESHDIKEDFSNLIRTLSS.

Residues 1 to 90 (MSLSLWQQCL…KPLSQIISQT (90 aa)) form a domain I, interacts with DnaA modulators region. Residues 91–126 (VTASVSAPSAPIVRVAAPSRPSWDNAAPQPELSYRS) are domain II. Positions 127–343 (NVNPKHTFDN…GALNRVIANA (217 aa)) are domain III, AAA+ region. The ATP site is built by Gly171, Gly173, Lys174, and Thr175. The interval 344-463 (NFTGRAITID…FSNLIRTLSS (120 aa)) is domain IV, binds dsDNA.

The protein belongs to the DnaA family. Oligomerizes as a right-handed, spiral filament on DNA at oriC.

The protein localises to the cytoplasm. Plays an essential role in the initiation and regulation of chromosomal replication. ATP-DnaA binds to the origin of replication (oriC) to initiate formation of the DNA replication initiation complex once per cell cycle. Binds the DnaA box (a 9 base pair repeat at the origin) and separates the double-stranded (ds)DNA. Forms a right-handed helical filament on oriC DNA; dsDNA binds to the exterior of the filament while single-stranded (ss)DNA is stabiized in the filament's interior. The ATP-DnaA-oriC complex binds and stabilizes one strand of the AT-rich DNA unwinding element (DUE), permitting loading of DNA polymerase. After initiation quickly degrades to an ADP-DnaA complex that is not apt for DNA replication. Binds acidic phospholipids. The sequence is that of Chromosomal replication initiator protein DnaA from Serratia proteamaculans (strain 568).